A 500-amino-acid polypeptide reads, in one-letter code: L-arabinose isomerase (500 aa).

The Mn(2+) site is built by E306, E333, H350, and H450.

This sequence belongs to the arabinose isomerase family. In terms of assembly, homohexamer. The cofactor is Mn(2+).

It carries out the reaction beta-L-arabinopyranose = L-ribulose. The protein operates within carbohydrate degradation; L-arabinose degradation via L-ribulose; D-xylulose 5-phosphate from L-arabinose (bacterial route): step 1/3. In terms of biological role, catalyzes the conversion of L-arabinose to L-ribulose. The sequence is that of L-arabinose isomerase from Yersinia pseudotuberculosis serotype I (strain IP32953).